Here is a 176-residue protein sequence, read N- to C-terminus: Adenine phosphoribosyltransferase (176 aa).

The protein belongs to the purine/pyrimidine phosphoribosyltransferase family. Homodimer.

It is found in the cytoplasm. The catalysed reaction is AMP + diphosphate = 5-phospho-alpha-D-ribose 1-diphosphate + adenine. It participates in purine metabolism; AMP biosynthesis via salvage pathway; AMP from adenine: step 1/1. Its function is as follows. Catalyzes a salvage reaction resulting in the formation of AMP, that is energically less costly than de novo synthesis. This chain is Adenine phosphoribosyltransferase, found in Borreliella burgdorferi (strain ATCC 35210 / DSM 4680 / CIP 102532 / B31) (Borrelia burgdorferi).